We begin with the raw amino-acid sequence, 319 residues long: Thioredoxin reductase (319 aa).

Position 36–43 (threonine 36–glutamine 43) interacts with FAD. A disulfide bridge connects residues cysteine 136 and cysteine 139. Residue aspartate 288–alanine 297 coordinates FAD.

The protein belongs to the class-II pyridine nucleotide-disulfide oxidoreductase family. As to quaternary structure, homodimer. It depends on FAD as a cofactor.

Its subcellular location is the cytoplasm. The catalysed reaction is [thioredoxin]-dithiol + NADP(+) = [thioredoxin]-disulfide + NADPH + H(+). This is Thioredoxin reductase (trxB) from Buchnera aphidicola subsp. Schizaphis graminum (strain Sg).